The primary structure comprises 215 residues: Meiotic chromosome segregation protein P8B7.28c (215 aa).

The segment at 159–202 (TINSEYADDVSDNTDEERTESKGQQESNSAEEYDDDDSDEDRME) is disordered. Composition is skewed to acidic residues over residues 164-176 (YADD…DEER) and 187-201 (SAEE…EDRM).

The protein localises to the nucleus. It localises to the nucleolus. Required for meiotic chromosome segregation. This is Meiotic chromosome segregation protein P8B7.28c from Schizosaccharomyces pombe (strain 972 / ATCC 24843) (Fission yeast).